A 264-amino-acid chain; its full sequence is Movement protein (264 aa).

Basic residues predominate over residues Phe-210–Pro-219. The segment at Phe-210 to Tyr-264 is disordered. Basic and acidic residues predominate over residues Lys-237 to Asp-247.

The protein belongs to the tobamovirus movement protein family. As to quaternary structure, binds to host RBCS at the plasmodesmata; this interaction seems required for viral systemic movement. In resistant plants, interacts with host MBP2C at host microtubules; this interaction prevents virus cell to cell movement. In resistant plants, interacts with host resistance (R) protein (e.g. tomato ToMV resistance protein TM-2(2), AC Q71BG9) at the host plasma membrane; this interaction triggers host defense responses leading to programmed cell death.

It is found in the host cytoplasm. Its subcellular location is the host cytoskeleton. The protein localises to the host cell junction. The protein resides in the host plasmodesma. Its function is as follows. Transports viral genome to neighboring plant cells directly through plasmosdesmata, without any budding. The movement protein allows efficient cell to cell propagation, by bypassing the host cell wall barrier. Forms a ribonucleoprotein complex with viral RNA. Binds microtubules and modulates microtubule stability. Can bind double-stranded DNA. Triggers host hypersensitive defense reaction in incompatible plants harboring resistance (R) proteins. The polypeptide is Movement protein (MP) (Tomato mosaic virus (strain LII) (ToMV)).